A 545-amino-acid chain; its full sequence is Protein disulfide isomerase-like 1-3 (545 aa).

Pro residues predominate over residues 1–16 (MWPRAPATPPPPPWPS). Residues 1 to 24 (MWPRAPATPPPPPWPSKPSAASRS) are disordered. The Thioredoxin 1 domain maps to 55-189 (ASSTAFAAAF…IVAYLKRQAG (135 aa)). N-linked (GlcNAc...) asparagine glycosylation is present at N87. Residues C107 and C110 each act as nucleophile in the active site. C107 and C110 are disulfide-bonded. N349 carries an N-linked (GlcNAc...) asparagine glycan. A Thioredoxin 2 domain is found at 403–545 (FTEGTLAPHV…TTTESVKDEL (143 aa)). Catalysis depends on nucleophile residues C453 and C456. The cysteines at positions 453 and 456 are disulfide-linked. The short motif at 542-545 (KDEL) is the Prevents secretion from ER element.

Belongs to the protein disulfide isomerase family.

It localises to the endoplasmic reticulum lumen. The catalysed reaction is Catalyzes the rearrangement of -S-S- bonds in proteins.. In terms of biological role, acts as a protein-folding catalyst that interacts with nascent polypeptides to catalyze the formation, isomerization, and reduction or oxidation of disulfide bonds. May play a role in storage protein biogenesis. The sequence is that of Protein disulfide isomerase-like 1-3 (PDIL1-3) from Oryza sativa subsp. japonica (Rice).